The sequence spans 1223 residues: Rho family-interacting cell polarization regulator 1 (1223 aa).

A Phosphoserine modification is found at Ser22. The stretch at 89–114 (LTAYLEVHQQEQEKLQGQIRESKRNS) forms a coiled coil. Phosphoserine occurs at positions 349 and 351. Position 355 is a phosphothreonine (Thr355). The interval 375–411 (NGTAWSLSSESSDDSSSPQLSGTARHSPAPRPLVQQP) is disordered. Residues 380 to 395 (SLSSESSDDSSSPQLS) show a composition bias toward low complexity. Phosphoserine is present on residues Ser456 and Ser459. Disordered stretches follow at residues 475–769 (ESLA…APQH) and 856–889 (FLNE…SPSA). Low complexity-rich tracts occupy residues 505-523 (GHSA…PTST) and 546-564 (PGPT…TTTH). The span at 565–592 (SAPSPLTHTTTGSTHKPIISTLTTTGPT) shows a compositional bias: polar residues. 2 stretches are compositionally biased toward low complexity: residues 601–650 (TTTS…PTPS) and 659–675 (TSPT…TTSP). The span at 680–695 (VSPSTSLELATLSSPS) shows a compositional bias: polar residues. The segment covering 858–867 (NEDEDEDNDV) has biased composition (acidic residues). Phosphoserine occurs at positions 874 and 875.

Belongs to the RIPOR family. Interacts (via N-terminus) with RHOA (GTP-bound form); this interaction links active RHOA to STK24 and STK26 kinases. Interacts with RHOB. Interacts with RHOC. Interacts (via C-terminus) with PDCD10; this interaction occurs in a Rho-independent manner. Interacts (via C-terminus) with STK24; this interaction occurs in a PDCD10-dependent and Rho-independent manner. Interacts (via C-terminus) with STK26; this interaction occurs in a PDCD10-dependent and Rho-independent manner. Interacts (via N-terminus) with 14-3-3 proteins; these interactions occur in a Rho-dependent manner.

The protein resides in the cytoplasm. It is found in the golgi apparatus. Functionally, downstream effector protein for Rho-type small GTPases that plays a role in cell polarity and directional migration. Acts as an adapter protein, linking active Rho proteins to STK24 and STK26 kinases, and hence positively regulates Golgi reorientation in polarized cell migration upon Rho activation. Involved in the subcellular relocation of STK26 from the Golgi to cytoplasm punctae in a Rho- and PDCD10-dependent manner upon serum stimulation. The chain is Rho family-interacting cell polarization regulator 1 (RIPOR1) from Homo sapiens (Human).